We begin with the raw amino-acid sequence, 955 residues long: UvrABC system protein A (955 aa).

35 to 42 (GLSGSGKS) contacts ATP. 2 consecutive ABC transporter domains span residues 322-601 (WGST…EESI) and 621-951 (GHDN…RYLK). An ATP-binding site is contributed by 654-661 (GVSGSGKS). Residues 754 to 780 (CEACQGDGLIKIEMHFLPDVYVKCDIC) form a C4-type zinc finger.

This sequence belongs to the ABC transporter superfamily. UvrA family. In terms of assembly, forms a heterotetramer with UvrB during the search for lesions.

The protein localises to the cytoplasm. The UvrABC repair system catalyzes the recognition and processing of DNA lesions. UvrA is an ATPase and a DNA-binding protein. A damage recognition complex composed of 2 UvrA and 2 UvrB subunits scans DNA for abnormalities. When the presence of a lesion has been verified by UvrB, the UvrA molecules dissociate. This chain is UvrABC system protein A, found in Rickettsia felis (strain ATCC VR-1525 / URRWXCal2) (Rickettsia azadi).